Consider the following 428-residue polypeptide: MTATITDINAHEILDSRANPTLEVRVTLSSQAYGCAAVPSGASTGEREAVELRDNNLERYGGKGVLQAVENVNGPIRDALLGQDPRSQEEIDRIMIELDGTENKANLGANAILGVSLAVAYAAANNADLPLYRYLGGDGGPFSMPVPMMNIINGGAHATNNLDFQEFMIVPVGAPTFAEALRYGAEVFHALKKRLVSRGLMSAVGDEGGFAPDLPNNEAAFELILEAIEDANYVPGKDIYLALDAASSELYQNGRYDFENNQLTSEEMIDRLTEWTKKYPVISIEDGLSENDWAGWKLLTERLENKVQLVGDDIFVTNPDILEKGIKKNIANAILVKLNQIGTLTETLATVGLAKSNKYGVIISHRSGETEDTTIADLAVATDARQIKTGSLCRSDRVAKYNRLLQIERELNDQAPYAGKEAFLFNRK.

Q165 provides a ligand contact to (2R)-2-phosphoglycerate. The active-site Proton donor is the E207. Residues D244, E285, and D312 each contribute to the Mg(2+) site. (2R)-2-phosphoglycerate contacts are provided by K337, R366, S367, and K388. The active-site Proton acceptor is K337.

The protein belongs to the enolase family. Component of the RNA degradosome, a multiprotein complex involved in RNA processing and mRNA degradation. The cofactor is Mg(2+).

The protein resides in the cytoplasm. It is found in the secreted. The protein localises to the cell surface. The enzyme catalyses (2R)-2-phosphoglycerate = phosphoenolpyruvate + H2O. The protein operates within carbohydrate degradation; glycolysis; pyruvate from D-glyceraldehyde 3-phosphate: step 4/5. Its function is as follows. Catalyzes the reversible conversion of 2-phosphoglycerate (2-PG) into phosphoenolpyruvate (PEP). It is essential for the degradation of carbohydrates via glycolysis. This chain is Enolase, found in Coxiella burnetii (strain Dugway 5J108-111).